Here is a 237-residue protein sequence, read N- to C-terminus: Phosphatidylserine decarboxylase proenzyme (237 aa).

Catalysis depends on Ser206, which acts as the Schiff-base intermediate with substrate; via pyruvic acid. Ser206 carries the post-translational modification Pyruvic acid (Ser); by autocatalysis.

It belongs to the phosphatidylserine decarboxylase family. PSD-A subfamily. Heterodimer of a large membrane-associated beta subunit and a small pyruvoyl-containing alpha subunit. Pyruvate serves as cofactor. In terms of processing, is synthesized initially as an inactive proenzyme. Formation of the active enzyme involves a self-maturation process in which the active site pyruvoyl group is generated from an internal serine residue via an autocatalytic post-translational modification. Two non-identical subunits are generated from the proenzyme in this reaction, and the pyruvate is formed at the N-terminus of the alpha chain, which is derived from the carboxyl end of the proenzyme. The post-translation cleavage follows an unusual pathway, termed non-hydrolytic serinolysis, in which the side chain hydroxyl group of the serine supplies its oxygen atom to form the C-terminus of the beta chain, while the remainder of the serine residue undergoes an oxidative deamination to produce ammonia and the pyruvoyl prosthetic group on the alpha chain.

It is found in the cell membrane. It carries out the reaction a 1,2-diacyl-sn-glycero-3-phospho-L-serine + H(+) = a 1,2-diacyl-sn-glycero-3-phosphoethanolamine + CO2. The protein operates within phospholipid metabolism; phosphatidylethanolamine biosynthesis; phosphatidylethanolamine from CDP-diacylglycerol: step 2/2. In terms of biological role, catalyzes the formation of phosphatidylethanolamine (PtdEtn) from phosphatidylserine (PtdSer). This Mycobacteroides abscessus (strain ATCC 19977 / DSM 44196 / CCUG 20993 / CIP 104536 / JCM 13569 / NCTC 13031 / TMC 1543 / L948) (Mycobacterium abscessus) protein is Phosphatidylserine decarboxylase proenzyme.